The following is a 369-amino-acid chain: tRNA-specific 2-thiouridylase MnmA (369 aa).

Residues 10–17 (GLSGGVDS) and Leu36 contribute to the ATP site. Cys97 functions as the Nucleophile in the catalytic mechanism. Residues Cys97 and Cys196 are joined by a disulfide bond. An ATP-binding site is contributed by Gly122. The segment at 146-148 (KDQ) is interaction with tRNA. Cys196 serves as the catalytic Cysteine persulfide intermediate. Residues 301 to 302 (RY) are interaction with tRNA.

Belongs to the MnmA/TRMU family.

It localises to the cytoplasm. It carries out the reaction S-sulfanyl-L-cysteinyl-[protein] + uridine(34) in tRNA + AH2 + ATP = 2-thiouridine(34) in tRNA + L-cysteinyl-[protein] + A + AMP + diphosphate + H(+). Its function is as follows. Catalyzes the 2-thiolation of uridine at the wobble position (U34) of tRNA, leading to the formation of s(2)U34. The chain is tRNA-specific 2-thiouridylase MnmA from Thermosynechococcus vestitus (strain NIES-2133 / IAM M-273 / BP-1).